The chain runs to 118 residues: UPF0342 protein BC_0880 (118 aa).

It belongs to the UPF0342 family.

The protein is UPF0342 protein BC_0880 of Bacillus cereus (strain ATCC 14579 / DSM 31 / CCUG 7414 / JCM 2152 / NBRC 15305 / NCIMB 9373 / NCTC 2599 / NRRL B-3711).